A 343-amino-acid chain; its full sequence is Glyceraldehyde-3-phosphate dehydrogenase (343 aa).

Residues 13-14 and glycine 111 contribute to the NAD(+) site; that span reads TI. 140-142 provides a ligand contact to D-glyceraldehyde 3-phosphate; sequence SCN. Cysteine 141 (nucleophile) is an active-site residue. NAD(+) is bound at residue arginine 169. 195–196 provides a ligand contact to D-glyceraldehyde 3-phosphate; sequence HA. Glutamine 302 is an NAD(+) binding site.

It belongs to the glyceraldehyde-3-phosphate dehydrogenase family. As to quaternary structure, homotetramer.

It is found in the cytoplasm. The catalysed reaction is D-glyceraldehyde 3-phosphate + phosphate + NADP(+) = (2R)-3-phospho-glyceroyl phosphate + NADPH + H(+). It catalyses the reaction D-glyceraldehyde 3-phosphate + phosphate + NAD(+) = (2R)-3-phospho-glyceroyl phosphate + NADH + H(+). It functions in the pathway carbohydrate degradation; glycolysis; pyruvate from D-glyceraldehyde 3-phosphate: step 1/5. This is Glyceraldehyde-3-phosphate dehydrogenase from Hyperthermus butylicus (strain DSM 5456 / JCM 9403 / PLM1-5).